Consider the following 157-residue polypeptide: Putative low molecular weight protein-tyrosine-phosphatase slr0328 (157 aa).

Cys-7 serves as the catalytic Nucleophile. Arg-13 is an active-site residue. Asp-124 acts as the Proton donor in catalysis.

Belongs to the low molecular weight phosphotyrosine protein phosphatase family.

The enzyme catalyses O-phospho-L-tyrosyl-[protein] + H2O = L-tyrosyl-[protein] + phosphate. The chain is Putative low molecular weight protein-tyrosine-phosphatase slr0328 from Synechocystis sp. (strain ATCC 27184 / PCC 6803 / Kazusa).